The primary structure comprises 60 residues: Movement protein TGBp3 (60 aa).

Over 1–6 (MHYIDW) the chain is Lumenal. Residues 7–23 (VILLTFAAALIVCLTPK) traverse the membrane as a helical segment. The Cytoplasmic segment spans residues 24–60 (PEPCIITVSGASATVSNCPNPELLTDLVKALKPAKPV).

Belongs to the Tymovirales TGBp3 protein family.

The protein localises to the host endoplasmic reticulum membrane. Its function is as follows. Plays a role in viral cell-to-cell propagation, by facilitating genome transport to neighboring plant cells through plasmosdesmata. May induce the formation of granular vesicles derived from the Endoplasmic reticulum, which align on actin filaments. This is Movement protein TGBp3 from Citrus (ICRSV).